A 589-amino-acid polypeptide reads, in one-letter code: Polypeptide N-acetylgalactosaminyltransferase 4 (589 aa).

Topologically, residues 1–11 (MLPRMLKMKTV) are cytoplasmic. Residues 12 to 31 (GTVLAVIWLFGLAFIYVQST) traverse the membrane as a helical; Signal-anchor for type II membrane protein segment. Over 32-589 (SSSLRPPGRH…WIFEKLDTYE (558 aa)) the chain is Lumenal. Positions 33–73 (SSLRPPGRHPPPLPQLDPLIPQNPPQNDEIRPKKSAPPIPT) are disordered. Disulfide bonds link C140–C369, C360–C438, C471–C488, C514–C531, and C553–C571. Residues 150–255 (MQPTTVIITY…QKWLEPLLAR (106 aa)) form a catalytic subdomain A region. The substrate site is built by D191 and R216. Position 239 (D239) interacts with Mn(2+). S240 is a binding site for substrate. Residue H241 participates in Mn(2+) binding. A catalytic subdomain B region spans residues 315–377 (PIRSPTMAGG…PCSRVGHVFR (63 aa)). W346 provides a ligand contact to substrate. Residue H374 participates in Mn(2+) binding. Substrate is bound by residues R377, H380, and Y382. The 132-residue stretch at 458 to 589 (TPGKSFQMKI…WIFEKLDTYE (132 aa)) folds into the Ricin B-type lectin domain. N523 carries N-linked (GlcNAc...) asparagine glycosylation.

It belongs to the glycosyltransferase 2 family. GalNAc-T subfamily. Requires Mn(2+) as cofactor.

Its subcellular location is the golgi apparatus membrane. It catalyses the reaction L-seryl-[protein] + UDP-N-acetyl-alpha-D-galactosamine = a 3-O-[N-acetyl-alpha-D-galactosaminyl]-L-seryl-[protein] + UDP + H(+). The catalysed reaction is L-threonyl-[protein] + UDP-N-acetyl-alpha-D-galactosamine = a 3-O-[N-acetyl-alpha-D-galactosaminyl]-L-threonyl-[protein] + UDP + H(+). The protein operates within protein modification; protein glycosylation. In terms of biological role, catalyzes the initial reaction in O-linked oligosaccharide biosynthesis, the transfer of an N-acetyl-D-galactosamine residue to a serine or threonine residue on the protein receptor. The chain is Polypeptide N-acetylgalactosaminyltransferase 4 (gly-4) from Caenorhabditis elegans.